The following is a 421-amino-acid chain: Imidazolonepropionase (421 aa).

Fe(3+) contacts are provided by histidine 81 and histidine 83. Histidine 81 and histidine 83 together coordinate Zn(2+). Arginine 90, tyrosine 153, and histidine 186 together coordinate 4-imidazolone-5-propanoate. Residue tyrosine 153 coordinates N-formimidoyl-L-glutamate. A Fe(3+)-binding site is contributed by histidine 251. Residue histidine 251 coordinates Zn(2+). Glutamate 254 contacts 4-imidazolone-5-propanoate. Aspartate 326 is a Fe(3+) binding site. Aspartate 326 is a binding site for Zn(2+). Residues asparagine 328 and glycine 330 each contribute to the N-formimidoyl-L-glutamate site. Serine 331 is a binding site for 4-imidazolone-5-propanoate.

The protein belongs to the metallo-dependent hydrolases superfamily. HutI family. The cofactor is Zn(2+). Requires Fe(3+) as cofactor.

It localises to the cytoplasm. The enzyme catalyses 4-imidazolone-5-propanoate + H2O = N-formimidoyl-L-glutamate. It participates in amino-acid degradation; L-histidine degradation into L-glutamate; N-formimidoyl-L-glutamate from L-histidine: step 3/3. Its function is as follows. Catalyzes the hydrolytic cleavage of the carbon-nitrogen bond in imidazolone-5-propanoate to yield N-formimidoyl-L-glutamate. It is the third step in the universal histidine degradation pathway. This chain is Imidazolonepropionase, found in Streptococcus pyogenes serotype M28 (strain MGAS6180).